The following is a 141-amino-acid chain: Putative pre-16S rRNA nuclease (141 aa).

This sequence belongs to the YqgF nuclease family.

Its subcellular location is the cytoplasm. Functionally, could be a nuclease involved in processing of the 5'-end of pre-16S rRNA. The protein is Putative pre-16S rRNA nuclease of Amoebophilus asiaticus (strain 5a2).